A 385-amino-acid polypeptide reads, in one-letter code: Cytochrome b (385 aa).

Transmembrane regions (helical) follow at residues 34-54 (FGSLTGLCLALQIISGLLLTM), 78-99 (WFIRNVHISGASLFFTCMFIHI), 114-134 (WYSGVILFILSMLTAFLGYVL), and 179-199 (FLVLHFLMPFSMIAVSLIHLV). H84 and H98 together coordinate heme b. Heme b is bound by residues H183 and H197. H202 is an a ubiquinone binding site. Transmembrane regions (helical) follow at residues 227-247 (FKDILGFSFLLTFLITFSLLL), 289-309 (LAGIIALVMSLSVLLLMPILI), 321-341 (LMQVTFWLMVCNFIFLSWLGA), and 348-368 (FILMSQISSFIYFFIFFVMFP).

This sequence belongs to the cytochrome b family. The cytochrome bc1 complex contains 3 respiratory subunits (MT-CYB, CYC1 and UQCRFS1), 2 core proteins (UQCRC1 and UQCRC2) and probably 6 low-molecular weight proteins. The cofactor is heme b.

The protein localises to the mitochondrion inner membrane. Functionally, component of the ubiquinol-cytochrome c reductase complex (complex III or cytochrome b-c1 complex) that is part of the mitochondrial respiratory chain. The b-c1 complex mediates electron transfer from ubiquinol to cytochrome c. Contributes to the generation of a proton gradient across the mitochondrial membrane that is then used for ATP synthesis. The protein is Cytochrome b (MT-CYB) of Eptatretus burgeri (Inshore hagfish).